We begin with the raw amino-acid sequence, 529 residues long: Cytochrome P450 monooxygenase ausG (529 aa).

The chain crosses the membrane as a helical span at residues 31–51 (LLVVCGLPGLLLLFFVTAILL). Residue Cys-470 participates in heme binding.

Belongs to the cytochrome P450 family. Heme serves as cofactor.

It localises to the membrane. The protein operates within secondary metabolite biosynthesis; terpenoid biosynthesis. Its function is as follows. Cytochrome P450 monooxygenase; part of the gene cluster that mediates the biosynthesis of calidodehydroaustin, a fungal meroterpenoid. The first step of the pathway is the synthesis of 3,5-dimethylorsellinic acid by the polyketide synthase ausA. 3,5-dimethylorsellinic acid is then prenylated by the polyprenyl transferase ausN. Further epoxidation by the FAD-dependent monooxygenase ausM and cyclization by the probable terpene cyclase ausL lead to the formation of protoaustinoid A. Protoaustinoid A is then oxidized to spiro-lactone preaustinoid A3 by the combined action of the FAD-binding monooxygenases ausB and ausC, and the dioxygenase ausE. Acid-catalyzed keto-rearrangement and ring contraction of the tetraketide portion of preaustinoid A3 by ausJ lead to the formation of preaustinoid A4. The aldo-keto reductase ausK, with the help of ausH, is involved in the next step by transforming preaustinoid A4 into isoaustinone which is in turn hydroxylated by the P450 monooxygenase ausI to form austinolide. The cytochrome P450 monooxygenase ausG modifies austinolide to austinol. Austinol is further acetylated to austin by the O-acetyltransferase ausP, which spontaneously changes to dehydroaustin. The cytochrome P450 monooxygenase ausR then converts dehydroaustin is into 7-dehydrodehydroaustin. The hydroxylation catalyzed by ausR permits the O-acetyltransferase ausQ to add an additional acetyl group to the molecule, leading to the formation of acetoxydehydroaustin. The short chain dehydrogenase ausT catalyzes the reduction of the double bond present between carbon atoms 1 and 2 to convert 7-dehydrodehydroaustin into 1,2-dihydro-7-hydroxydehydroaustin. AusQ catalyzes not only an acetylation reaction but also the addition of the PKS ausV diketide product to 1,2-dihydro-7-hydroxydehydroaustin, forming precalidodehydroaustin. Finally, the iron/alpha-ketoglutarate-dependent dioxygenase converts precalidodehydroaustin into calidodehydroaustin. The chain is Cytochrome P450 monooxygenase ausG from Aspergillus calidoustus.